The primary structure comprises 324 residues: Acetyl-coenzyme A carboxylase carboxyl transferase subunit alpha (324 aa).

Residues isoleucine 37 to glutamine 291 form the CoA carboxyltransferase C-terminal domain.

This sequence belongs to the AccA family. In terms of assembly, acetyl-CoA carboxylase is a heterohexamer composed of biotin carboxyl carrier protein (AccB), biotin carboxylase (AccC) and two subunits each of ACCase subunit alpha (AccA) and ACCase subunit beta (AccD).

It localises to the cytoplasm. The catalysed reaction is N(6)-carboxybiotinyl-L-lysyl-[protein] + acetyl-CoA = N(6)-biotinyl-L-lysyl-[protein] + malonyl-CoA. The protein operates within lipid metabolism; malonyl-CoA biosynthesis; malonyl-CoA from acetyl-CoA: step 1/1. In terms of biological role, component of the acetyl coenzyme A carboxylase (ACC) complex. First, biotin carboxylase catalyzes the carboxylation of biotin on its carrier protein (BCCP) and then the CO(2) group is transferred by the carboxyltransferase to acetyl-CoA to form malonyl-CoA. The chain is Acetyl-coenzyme A carboxylase carboxyl transferase subunit alpha from Bacillus cereus (strain B4264).